The sequence spans 482 residues: MSTMEEEKVISKSTSVDISEGTFDDITIEKKEEAKLVRKLDWYLMPMFSVLYFLSFLDRANIGNAAVVGLKEDLKLQAYQYSAAVSVFYATYITAETPSVLLVKKFGPHYYLSAMIIGWSLVTIFTCFVRHYWSLVLTRLLLGICEGGFFPCLSLYISMTYKREEQGKRLAYLYVCSCFSGAFGGLIATGLTKIPKSSGLPNWGWLYIIEGLISAISALWILFCLPDDPSTARFLNPREKELMKIRAEQRQKYMGSPNFDWTQFRKAFKDPKMYMSCVIQFCQDLVLYGISTFLPSILKLELGYSSLAAQYMSVPVYALGGISVYVICLLSDRTNIRGWFIIGMNFFGLAGFIILLATTNSAANYVATYLIALPLYPTVALNITWINNNMAPHYRRATALGCNQTIGNLAGVIAGQVYRSSPYKLGHGFALGCTVVGTLTATAMRFYLQRQNKIKQEILNGERVDEKKERDGCDALDFVYVL.

12 consecutive transmembrane segments (helical) span residues 40 to 57 (LDWYLMPMFSVLYFLSFL), 83 to 103 (AAVSVFYATYITAETPSVLLV), 109 to 129 (HYYLSAMIIGWSLVTIFTCFV), 140 to 160 (LLLGICEGGFFPCLSLYISMT), 170 to 190 (LAYLYVCSCFSGAFGGLIATG), 205 to 225 (WLYIIEGLISAISALWILFCL), 278 to 298 (VIQFCQDLVLYGISTFLPSIL), 311 to 331 (YMSVPVYALGGISVYVICLLS), 338 to 358 (GWFIIGMNFFGLAGFIILLAT), 366 to 386 (VATYLIALPLYPTVALNITWI), 399 to 418 (ALGCNQTIGNLAGVIAGQVY), and 428 to 448 (GFALGCTVVGTLTATAMRFYL).

The protein belongs to the major facilitator superfamily. Allantoate permease family.

It is found in the endoplasmic reticulum. The protein localises to the membrane. This is an uncharacterized protein from Schizosaccharomyces pombe (strain 972 / ATCC 24843) (Fission yeast).